Consider the following 453-residue polypeptide: Glutamyl-tRNA reductase (453 aa).

Residues 54-57, Ser113, 118-120, and Gln124 each bind substrate; these read TCNR and EAQ. Cys55 serves as the catalytic Nucleophile. Residue 193–198 participates in NADP(+) binding; sequence GGGEVS.

It belongs to the glutamyl-tRNA reductase family. As to quaternary structure, homodimer.

It carries out the reaction (S)-4-amino-5-oxopentanoate + tRNA(Glu) + NADP(+) = L-glutamyl-tRNA(Glu) + NADPH + H(+). Its pathway is porphyrin-containing compound metabolism; protoporphyrin-IX biosynthesis; 5-aminolevulinate from L-glutamyl-tRNA(Glu): step 1/2. The protein operates within porphyrin-containing compound metabolism; chlorophyll biosynthesis. Functionally, catalyzes the NADPH-dependent reduction of glutamyl-tRNA(Glu) to glutamate 1-semialdehyde (GSA). This is Glutamyl-tRNA reductase from Chloroflexus aggregans (strain MD-66 / DSM 9485).